The chain runs to 631 residues: 1-deoxy-D-xylulose-5-phosphate synthase (631 aa).

Residues histidine 73 and 114 to 116 each bind thiamine diphosphate; that span reads SHA. Aspartate 145 contributes to the Mg(2+) binding site. Residues 146 to 147, asparagine 175, tyrosine 286, and glutamate 368 each bind thiamine diphosphate; that span reads GA. Asparagine 175 contributes to the Mg(2+) binding site.

The protein belongs to the transketolase family. DXPS subfamily. Homodimer. Requires Mg(2+) as cofactor. Thiamine diphosphate is required as a cofactor.

It catalyses the reaction D-glyceraldehyde 3-phosphate + pyruvate + H(+) = 1-deoxy-D-xylulose 5-phosphate + CO2. The protein operates within metabolic intermediate biosynthesis; 1-deoxy-D-xylulose 5-phosphate biosynthesis; 1-deoxy-D-xylulose 5-phosphate from D-glyceraldehyde 3-phosphate and pyruvate: step 1/1. Functionally, catalyzes the acyloin condensation reaction between C atoms 2 and 3 of pyruvate and glyceraldehyde 3-phosphate to yield 1-deoxy-D-xylulose-5-phosphate (DXP). This is 1-deoxy-D-xylulose-5-phosphate synthase from Nocardia farcinica (strain IFM 10152).